We begin with the raw amino-acid sequence, 2748 residues long: Chalcone synthase cfoA (2748 aa).

An adenylation (A) domain region spans residues 13–511 (RHAGESCEKV…DTVPRTVIGK (499 aa)). The Carrier 1 domain occupies 535-620 (DLIEALVMAE…AVSTYLHGRL (86 aa)). At Ser-579 the chain carries O-(pantetheine 4'-phosphoryl)serine. The Ketosynthase family 3 (KS3) domain maps to 641 to 1073 (VEPIAIVSMA…GTNSHIILEQ (433 aa)). Residues Cys-813, His-948, and His-995 each act as for beta-ketoacyl synthase activity in the active site. Positions 1196-1489 (FSGQGSWMPT…ATHGTVDKLL (294 aa)) constitute a Malonyl-CoA:ACP transacylase (MAT) domain. The segment at 1561–1842 (LGHEMIFNAT…ENSFSMTMTD (282 aa)) is dehydratase (DH) domain. An N-terminal hotdog fold region spans residues 1563 to 1707 (HEMIFNATSI…GTFQLISQPN (145 aa)). The 304-residue stretch at 1563-1866 (HEMIFNATSI…LRTWQPTVAG (304 aa)) folds into the PKS/mFAS DH domain. Catalysis depends on His-1595, which acts as the Proton acceptor; for dehydratase activity. The interval 1722–1866 (AESDVNISEA…LRTWQPTVAG (145 aa)) is C-terminal hotdog fold. Asp-1784 acts as the Proton donor; for dehydratase activity in catalysis. The Ketoreductase (KR) domain occupies 2031–2210 (GTVLITGGTG…ALSLAWGPWA (180 aa)). The region spanning 2305 to 2383 (NRHDTLLGLV…ALVEYLLPRI (79 aa)) is the Carrier 2 domain. An O-(pantetheine 4'-phosphoryl)serine modification is found at Ser-2342. Residues 2386–2426 (EPQPEVDTDSDASTTAGDTSVSRDSGKEDELSPSSSVTTLA) form a disordered region. Residues 2396–2407 (DASTTAGDTSVS) are compositionally biased toward low complexity. The thioester reductase (TE) domain stretch occupies residues 2519 to 2742 (VGLSVYSNLA…GAAGEIERWA (224 aa)).

This sequence in the N-terminal section; belongs to the NRP synthetase family. It depends on pantetheine 4'-phosphate as a cofactor.

It participates in secondary metabolite biosynthesis; flavonoid biosynthesis. Functionally, hybrid PKS-NRPS synthetase; part of the gene cluster that mediates the biosynthesis of chlorflavonin, a fungal flavonoid with acetolactate synthase inhibitory activity. Within the pathway, the PKS-NRPS cfoA, is responsible for the generation of the key precursor chalcone. The adenylation (A) domain activates benzoic acid or p-hydroxybenzoic acid which are transferred to the thiol group of the pantetheinyl residue of the T domain, and further transferred to the adjacent PKS portion of cfoA. Within the PKS portion of cfoA, benzoic acid or p-hydroxybenzoic acid act as starter units for respectively four malonyl-CoA molecules for elongation by the AT and KS domains. Afterwards, chalcone is cyclized through Claisen condensation and thereby released either spontaneously or catalyzed by the TE domain. Then, a new type of chalcone isomerase, cfoK, catalyzes the conversion of the chalcone into a flavanone by a histidine-mediated oxa-Michael addition mechanism. The desaturation of flavanone to flavone is catalyzed by a new type of flavone synthase, the flavin mononucleotide (FMN)-dependent oxidoreductase cfoJ. Monooxygenases cfoF, cfoG, and P450 cfoH are responsible for the hydroxylation of the flavonoid skeleton at sites C3, C8, and C2', respectively. Like cfoF, the dehydratase cfoI plays also a role in the hydroxylation of position C3. Methyltransferases cfoB, cfoC, and cfoD then catalyze the methylation of C7-OH, C8-OH, and C3-OH, respectively. Finally, the monooxygenase cfoE is responsible for the chlorination of flavonoid at position C3'. This chain is Chalcone synthase cfoA, found in Aspergillus candidus.